The sequence spans 232 residues: Adenosylcobinamide-GDP ribazoletransferase (232 aa).

6 helical membrane passes run 31–51 (LPSFFPLVGYIVGSIYYLGAL), 59–79 (VFFLVLAFYFFDLFHFDGFLD), 102–122 (VGPFAVFFGTLFVVVFWNLYL), 126–146 (PFYFFISSTFGRYSMVLLMAF), 167–187 (LLISTIFTFFLIIFFKQYIIS), and 209–229 (VTGDVLGGTCLFVNGLILLIL).

This sequence belongs to the CobS family. It depends on Mg(2+) as a cofactor.

It localises to the cell inner membrane. It catalyses the reaction alpha-ribazole + adenosylcob(III)inamide-GDP = adenosylcob(III)alamin + GMP + H(+). It carries out the reaction alpha-ribazole 5'-phosphate + adenosylcob(III)inamide-GDP = adenosylcob(III)alamin 5'-phosphate + GMP + H(+). It participates in cofactor biosynthesis; adenosylcobalamin biosynthesis; adenosylcobalamin from cob(II)yrinate a,c-diamide: step 7/7. In terms of biological role, joins adenosylcobinamide-GDP and alpha-ribazole to generate adenosylcobalamin (Ado-cobalamin). Also synthesizes adenosylcobalamin 5'-phosphate from adenosylcobinamide-GDP and alpha-ribazole 5'-phosphate. In Thermosipho africanus (strain TCF52B), this protein is Adenosylcobinamide-GDP ribazoletransferase.